Reading from the N-terminus, the 613-residue chain is Myrcene synthase, chloroplastic (613 aa).

A chloroplast-targeting transit peptide spans 1–46; the sequence is MQCMAVHQFAPLLSLLNCSRISSDFGRLFTPKTSTKSRSSTCHPIQ. Residues Arg-324, Asp-361, and Asp-365 each contribute to the (2E)-geranyl diphosphate site. 2 residues coordinate Mg(2+): Asp-361 and Asp-365. The DDXXD motif signature appears at 361 to 365; sequence DDIYD. The chain crosses the membrane as a helical span at residues 455 to 475; that stretch reads IEMAWLSIGGPVILVHAYFCF. 2 residues coordinate (2E)-geranyl diphosphate: Arg-503 and Asp-506. Positions 506, 510, and 514 each coordinate Mg(2+).

The protein belongs to the terpene synthase family. Tpsb subfamily. Mg(2+) is required as a cofactor. Mn(2+) serves as cofactor. As to expression, expressed in trichomes.

It is found in the plastid. It localises to the chloroplast membrane. It catalyses the reaction (2E)-geranyl diphosphate = beta-myrcene + diphosphate. The protein operates within secondary metabolite biosynthesis; terpenoid biosynthesis. Functionally, monoterpene synthase that catalyzes the formation of myrcene. Can use geranyl diphosphate as substrate, but not farnesyl diphosphate or geranylgeranyl diphosphate. In Humulus lupulus (European hop), this protein is Myrcene synthase, chloroplastic.